A 364-amino-acid chain; its full sequence is Spermidine/putrescine import ATP-binding protein PotA (364 aa).

The ABC transporter domain maps to 6–236 (IEIRQIYKSY…PANLHVAMFI (231 aa)). 38–45 (GPSGCGKT) provides a ligand contact to ATP.

This sequence belongs to the ABC transporter superfamily. Spermidine/putrescine importer (TC 3.A.1.11.1) family. In terms of assembly, the complex is composed of two ATP-binding proteins (PotA), two transmembrane proteins (PotB and PotC) and a solute-binding protein (PotD).

The protein localises to the cell inner membrane. It catalyses the reaction ATP + H2O + polyamine-[polyamine-binding protein]Side 1 = ADP + phosphate + polyamineSide 2 + [polyamine-binding protein]Side 1.. In terms of biological role, part of the ABC transporter complex PotABCD involved in spermidine/putrescine import. Responsible for energy coupling to the transport system. The chain is Spermidine/putrescine import ATP-binding protein PotA from Legionella pneumophila (strain Lens).